The primary structure comprises 778 residues: Exo-beta-D-glucosaminidase (778 aa).

Substrate is bound by residues Tyr-55, 104–105 (GE), 180–181 (DE), Glu-308, Glu-349, and Tyr-381. The active-site Proton donor is Glu-181. The active-site Nucleophile is the Glu-349.

The protein belongs to the glycosyl hydrolase 35 family. Homodimer.

It localises to the cytoplasm. The catalysed reaction is beta-D-glucosaminyl-(1-&gt;4)-N-acetyl-D-glucosamine + H2O = D-glucosamine + N-acetyl-D-glucosamine. The protein operates within glycan degradation; chitin degradation. Exo-type enzyme that specifically cleaves the non-reducing terminal glycosidic bond of chitooligosaccharides. Catalyzes the hydrolysis of GlcN-GlcNAc to glucosamine (GlcN) and N-acetylglucosamine (GlcNAc). Involved in chitin degradation. Can also hydrolyze chitosan and chitooligosaccharides of various chain lengths. This chain is Exo-beta-D-glucosaminidase, found in Pyrococcus horikoshii (strain ATCC 700860 / DSM 12428 / JCM 9974 / NBRC 100139 / OT-3).